Consider the following 376-residue polypeptide: NAD(P)H-quinone oxidoreductase subunit 1, chloroplastic (376 aa).

9 consecutive transmembrane segments (helical) span residues 27 to 47, 65 to 85, 97 to 117, 130 to 150, 166 to 186, 251 to 271, 272 to 292, 310 to 330, and 353 to 373; these read LISI…GVLV, PEYA…KLLI, WLFS…YLVV, LGIF…LIAG, AAQS…ISLL, GIKF…SSLF, AVVL…IFFI, LIIP…FIFF, and FLLP…LTLF.

This sequence belongs to the complex I subunit 1 family. As to quaternary structure, NDH is composed of at least 16 different subunits, 5 of which are encoded in the nucleus.

The protein resides in the plastid. It localises to the chloroplast thylakoid membrane. The catalysed reaction is a plastoquinone + NADH + (n+1) H(+)(in) = a plastoquinol + NAD(+) + n H(+)(out). It carries out the reaction a plastoquinone + NADPH + (n+1) H(+)(in) = a plastoquinol + NADP(+) + n H(+)(out). Functionally, NDH shuttles electrons from NAD(P)H:plastoquinone, via FMN and iron-sulfur (Fe-S) centers, to quinones in the photosynthetic chain and possibly in a chloroplast respiratory chain. The immediate electron acceptor for the enzyme in this species is believed to be plastoquinone. Couples the redox reaction to proton translocation, and thus conserves the redox energy in a proton gradient. The polypeptide is NAD(P)H-quinone oxidoreductase subunit 1, chloroplastic (Chara vulgaris (Common stonewort)).